The chain runs to 298 residues: Protoheme IX farnesyltransferase (298 aa).

Transmembrane regions (helical) follow at residues 24–44 (VVSL…PAWP), 46–66 (WTTI…AAAF), 97–117 (LVFA…VVNP), 118–138 (LTMW…TVLL), 146–166 (IVIG…AATG), 172–192 (ALLL…ALAL), 231–251 (LLPV…VLLG), and 278–298 (IWYL…PIPV).

Belongs to the UbiA prenyltransferase family. Protoheme IX farnesyltransferase subfamily.

Its subcellular location is the cell inner membrane. It carries out the reaction heme b + (2E,6E)-farnesyl diphosphate + H2O = Fe(II)-heme o + diphosphate. The protein operates within porphyrin-containing compound metabolism; heme O biosynthesis; heme O from protoheme: step 1/1. In terms of biological role, converts heme B (protoheme IX) to heme O by substitution of the vinyl group on carbon 2 of heme B porphyrin ring with a hydroxyethyl farnesyl side group. The sequence is that of Protoheme IX farnesyltransferase from Thiobacillus denitrificans (strain ATCC 25259 / T1).